Consider the following 334-residue polypeptide: Putative carboxypeptidase VC_A0337 (334 aa).

Ser112 (nucleophile) is an active-site residue. Active-site charge relay system residues include Glu234 and His302.

Belongs to the peptidase S66 family.

The protein is Putative carboxypeptidase VC_A0337 of Vibrio cholerae serotype O1 (strain ATCC 39315 / El Tor Inaba N16961).